A 296-amino-acid chain; its full sequence is 33 kDa chaperonin (296 aa).

Intrachain disulfides connect C233-C235 and C267-C270.

Belongs to the HSP33 family. In terms of processing, under oxidizing conditions two disulfide bonds are formed involving the reactive cysteines. Under reducing conditions zinc is bound to the reactive cysteines and the protein is inactive.

The protein localises to the cytoplasm. Its function is as follows. Redox regulated molecular chaperone. Protects both thermally unfolding and oxidatively damaged proteins from irreversible aggregation. Plays an important role in the bacterial defense system toward oxidative stress. In Actinobacillus pleuropneumoniae serotype 5b (strain L20), this protein is 33 kDa chaperonin.